Reading from the N-terminus, the 325-residue chain is Psp operon transcriptional activator (325 aa).

One can recognise a Sigma-54 factor interaction domain in the interval 15-237; it reads FLEVLEQVSH…ELKNVVERSV (223 aa). ATP is bound by residues 36-43 and 99-108; these read GERGTGKE and ADGGTLFLDE. The segment at residues 302-321 is a DNA-binding region (H-T-H motif); it reads QKRAAELLGLTYHQFRALLK.

In terms of assembly, forms a complex with PspA, which is composed of around 6 PspF subunits and 6 PspA subunits.

It is found in the cytoplasm. With respect to regulation, ATPase activity is inhibited by interaction with PspA. Under inducing conditions, the interaction is disrupted, allowing activation of psp transcription. In terms of biological role, transcriptional activator for the phage shock protein (psp) operon (pspABCDE) and pspG gene. This chain is Psp operon transcriptional activator (pspF), found in Escherichia coli (strain K12).